We begin with the raw amino-acid sequence, 209 residues long: Imidazole glycerol phosphate synthase subunit HisH (209 aa).

The Glutamine amidotransferase type-1 domain maps to 1–205 (MIAIIDYGMG…KGVVKQWKSS (205 aa)). Residue Cys-79 is the Nucleophile of the active site. Active-site residues include His-180 and Glu-182.

In terms of assembly, heterodimer of HisH and HisF.

It localises to the cytoplasm. The catalysed reaction is 5-[(5-phospho-1-deoxy-D-ribulos-1-ylimino)methylamino]-1-(5-phospho-beta-D-ribosyl)imidazole-4-carboxamide + L-glutamine = D-erythro-1-(imidazol-4-yl)glycerol 3-phosphate + 5-amino-1-(5-phospho-beta-D-ribosyl)imidazole-4-carboxamide + L-glutamate + H(+). It catalyses the reaction L-glutamine + H2O = L-glutamate + NH4(+). It participates in amino-acid biosynthesis; L-histidine biosynthesis; L-histidine from 5-phospho-alpha-D-ribose 1-diphosphate: step 5/9. IGPS catalyzes the conversion of PRFAR and glutamine to IGP, AICAR and glutamate. The HisH subunit catalyzes the hydrolysis of glutamine to glutamate and ammonia as part of the synthesis of IGP and AICAR. The resulting ammonia molecule is channeled to the active site of HisF. The sequence is that of Imidazole glycerol phosphate synthase subunit HisH from Bacillus cytotoxicus (strain DSM 22905 / CIP 110041 / 391-98 / NVH 391-98).